Consider the following 143-residue polypeptide: Hemoglobin subunit alpha (143 aa).

Ser1 is subject to N-acetylserine. The Globin domain maps to 1-143; that stretch reads SLSATDKARV…LALALSEKYR (143 aa). His60 provides a ligand contact to O2. His89 is a binding site for heme b.

It belongs to the globin family. Heterotetramer of two alpha chains and two beta chains. In terms of tissue distribution, red blood cells.

Its function is as follows. Involved in oxygen transport from gills to the various peripheral tissues. The protein is Hemoglobin subunit alpha (hba) of Leiostomus xanthurus (Spot).